Here is a 376-residue protein sequence, read N- to C-terminus: Beta-centractin (376 aa).

An N-acetylmethionine modification is found at methionine 1. Tyrosine 4 carries the post-translational modification 3'-nitrotyrosine.

The protein belongs to the actin family. ARP1 subfamily.

The protein resides in the cytoplasm. Its subcellular location is the cytoskeleton. It is found in the microtubule organizing center. It localises to the centrosome. Its function is as follows. Component of a multi-subunit complex involved in microtubule based vesicle motility. It is associated with the centrosome. This is Beta-centractin (Actr1b) from Mus musculus (Mouse).